A 223-amino-acid chain; its full sequence is Neurotrophic factor BDNF precursor form (223 aa).

An N-terminal signal peptide occupies residues 1–5 (SCMKA). Residues 6 to 114 (APMKEVSLRG…AANMSMRVRR (109 aa)) constitute a propeptide that is removed on maturation. Asn-107 carries N-linked (GlcNAc...) asparagine glycosylation. Intrachain disulfides connect Cys-127/Cys-194 and Cys-172/Cys-223.

The protein belongs to the NGF-beta family.

It is found in the secreted. In terms of biological role, promotes the survival of neuronal populations that are all located either in the central nervous system or directly connected to it. The polypeptide is Neurotrophic factor BDNF precursor form (BDNF) (Ramphotyphlops sp. (strain YPM 13663) (Blind snake)).